The primary structure comprises 504 residues: Anaerobic nitric oxide reductase transcription regulator NorR (504 aa).

Asp-57 bears the 4-aspartylphosphate mark. The Sigma-54 factor interaction domain maps to Met-187–Val-416. Residues Gly-215 to Glu-222 and Ala-278 to Glu-287 contribute to the ATP site. Residues Trp-479 to Lys-498 constitute a DNA-binding region (H-T-H motif).

The protein operates within nitrogen metabolism; nitric oxide reduction. Its function is as follows. Required for the expression of anaerobic nitric oxide (NO) reductase, acts as a transcriptional activator for at least the norVW operon. Activation also requires sigma-54. In Escherichia coli O8 (strain IAI1), this protein is Anaerobic nitric oxide reductase transcription regulator NorR.